We begin with the raw amino-acid sequence, 237 residues long: Phosphoribosylaminoimidazole-succinocarboxamide synthase (237 aa).

This sequence belongs to the SAICAR synthetase family.

The enzyme catalyses 5-amino-1-(5-phospho-D-ribosyl)imidazole-4-carboxylate + L-aspartate + ATP = (2S)-2-[5-amino-1-(5-phospho-beta-D-ribosyl)imidazole-4-carboxamido]succinate + ADP + phosphate + 2 H(+). It functions in the pathway purine metabolism; IMP biosynthesis via de novo pathway; 5-amino-1-(5-phospho-D-ribosyl)imidazole-4-carboxamide from 5-amino-1-(5-phospho-D-ribosyl)imidazole-4-carboxylate: step 1/2. The chain is Phosphoribosylaminoimidazole-succinocarboxamide synthase from Escherichia coli O7:K1 (strain IAI39 / ExPEC).